A 37-amino-acid chain; its full sequence is Large ribosomal subunit protein bL36c (37 aa).

The protein belongs to the bacterial ribosomal protein bL36 family.

The protein resides in the plastid. It is found in the chloroplast. The polypeptide is Large ribosomal subunit protein bL36c (Chloranthus spicatus (Chulantree)).